A 691-amino-acid chain; its full sequence is TBC1 domain family member 15 (691 aa).

Ala2 carries the N-acetylalanine modification. Ser23, Ser70, Ser205, Pro213, and Ser274 each carry phosphoserine. One can recognise a Rab-GAP TBC domain in the interval 346 to 556 (GLSHALRKQA…RLWEVMWTEL (211 aa)). Phosphoserine is present on residues Ser640 and Ser675. Thr689 carries the phosphothreonine modification.

Interacts with non-phosphorylated form of RAB8A; phosphorylation of RAB8A at 'Thr-72' disrupts this interaction. Interacts with ARMC12. As to expression, ubiquitous.

Its subcellular location is the cytoplasm. In terms of biological role, acts as a GTPase activating protein for RAB7A. Does not act on RAB4, RAB5 or RAB6. This chain is TBC1 domain family member 15 (TBC1D15), found in Homo sapiens (Human).